The following is a 178-amino-acid chain: Glucagon-2 (178 aa).

Residues 1–21 (MFGIHSLAGVLLLVIVQSQLA) form the signal peptide. 3 propeptides span residues 83–87 (SGAPS), 123–134 (ESAEESMNGPMS), and 171–178 (SNKRQEDH).

This sequence belongs to the glucagon family.

It is found in the secreted. Promotes hydrolysis of glycogen and lipids, and raises the blood sugar level. This chain is Glucagon-2 (gcg2), found in Oncorhynchus mykiss (Rainbow trout).